Here is a 55-residue protein sequence, read N- to C-terminus: RESPSSRMECYEQAERYGYGGYGGGRYGGGYGSGRGQPVGQGVERSHDDNRNQPR.

Residues 18 to 39 (GYGGYGGGRYGGGYGSGRGQPV) show a composition bias toward gly residues. The disordered stretch occupies residues 18–55 (GYGGYGGGRYGGGYGSGRGQPVGQGVERSHDDNRNQPR). The span at 44-55 (ERSHDDNRNQPR) shows a compositional bias: basic and acidic residues.

In terms of assembly, monomer and homodimer. Might act by homodimer formation.

Its function is as follows. Has antibacterial activity against the Gram-negative bacteria Klebsiella sp., Proteus sp., E.coli ATCC 8739 (MIC=72 ug/ml) and K.pneumoniae (MIC=32 ug/ml). Has no activity against the Gram-negative bacterium S.typhimurium or the Gram-positive bacterium S.aureus. Does not have antifungal activity against the human and plant pathogenic fungi F.oxysporum, A.fumigatus and R.solani. The sequence is that of Glycine-rich antimicrobial peptide Pg-AMP from Psidium guajava (Guava).